The primary structure comprises 362 residues: Endolytic peptidoglycan transglycosylase RlpA (362 aa).

The first 17 residues, 1-17, serve as a signal peptide directing secretion; the sequence is MRKQWLGICIAAGMLAA. The N-palmitoyl cysteine moiety is linked to residue Cys18. Residue Cys18 is the site of S-diacylglycerol cysteine attachment. A disordered region spans residues 198-276; it reads PDLSGGAGTS…PSTTPATSPA (79 aa). Positions 262-276 are enriched in low complexity; the sequence is PVVTAPSTTPATSPA. The region spanning 285 to 361 is the SPOR domain; the sequence is QSASGNFMVQ…AQLQSFITTA (77 aa).

Belongs to the RlpA family.

Its subcellular location is the cell membrane. Lytic transglycosylase with a strong preference for naked glycan strands that lack stem peptides. The sequence is that of Endolytic peptidoglycan transglycosylase RlpA from Escherichia coli O157:H7.